Here is a 127-residue protein sequence, read N- to C-terminus: Large ribosomal subunit protein bL12 (127 aa).

Residues 96 to 127 (GTPSTLKEAVSKDDAEEAAKQLKEAGAEVEVK) form a disordered region. Basic and acidic residues predominate over residues 104-127 (AVSKDDAEEAAKQLKEAGAEVEVK).

The protein belongs to the bacterial ribosomal protein bL12 family. As to quaternary structure, homodimer. Part of the ribosomal stalk of the 50S ribosomal subunit. Forms a multimeric L10(L12)X complex, where L10 forms an elongated spine to which 2 to 4 L12 dimers bind in a sequential fashion. Binds GTP-bound translation factors.

In terms of biological role, forms part of the ribosomal stalk which helps the ribosome interact with GTP-bound translation factors. Is thus essential for accurate translation. This chain is Large ribosomal subunit protein bL12, found in Oleidesulfovibrio alaskensis (strain ATCC BAA-1058 / DSM 17464 / G20) (Desulfovibrio alaskensis).